Consider the following 121-residue polypeptide: Small ribosomal subunit protein bS16 (121 aa).

Residues 97–114 show a composition bias toward basic and acidic residues; sequence LAKAKTKDGDNDSSKAES. Residues 97-121 are disordered; sequence LAKAKTKDGDNDSSKAESESNEAET.

The protein belongs to the bacterial ribosomal protein bS16 family.

The protein is Small ribosomal subunit protein bS16 of Prochlorococcus marinus (strain MIT 9301).